Here is a 242-residue protein sequence, read N- to C-terminus: MVEPMNQSSVFQPPDRQRVDERIATTIADAILDGVFPPGSTLPPERDLAERLGVNRTSLRQGLARLQQMGLIEVRHGSGSVVRDPEGLTHPAVVEALVRKLGPDFLVELLEIRAALGPLIGRLAAARSTPEDAEALCAALEVVQQADTAAARQAADLAYFRVLIHSTRNRALGLLYRWVEHAFGGREHALTGAYDDADPVLTDLRAINGAVLAGDPAAAAATVEAYLNASALRMVKSYRDRA.

Positions 17–85 (QRVDERIATT…HGSGSVVRDP (69 aa)) constitute an HTH gntR-type domain. Positions 45 to 64 (ERDLAERLGVNRTSLRQGLA) form a DNA-binding region, H-T-H motif.

This is an uncharacterized protein from Mycobacterium tuberculosis (strain ATCC 25618 / H37Rv).